The sequence spans 399 residues: Serine/threonine-protein kinase PknL (399 aa).

Topologically, residues 1–368 are cytoplasmic; it reads MVEAGTRDPL…FIWARQHARR (368 aa). The region spanning 19 to 278 is the Protein kinase domain; it reads YLVQAKIASG…IAMGADLEAI (260 aa). ATP contacts are provided by residues 25–33 and K48; that span reads IASGGTSTV. The active-site Proton acceptor is the D142. Residues 312–346 form a disordered region; that stretch reads GQLGAKPVHHPTRQLTRQPGDCSEPASGSEPEHEP. A helical transmembrane segment spans residues 369–389; the sequence is MVLVWVSVVLAITGLVASAAW. Residues 390 to 399 lie on the Extracellular side of the membrane; the sequence is TIGSNLSGLL.

It belongs to the protein kinase superfamily. Ser/Thr protein kinase family. Post-translationally, autophosphorylated.

The protein localises to the cell membrane. The enzyme catalyses L-seryl-[protein] + ATP = O-phospho-L-seryl-[protein] + ADP + H(+). It catalyses the reaction L-threonyl-[protein] + ATP = O-phospho-L-threonyl-[protein] + ADP + H(+). The chain is Serine/threonine-protein kinase PknL (pknL) from Mycobacterium bovis (strain ATCC BAA-935 / AF2122/97).